Reading from the N-terminus, the 450-residue chain is Putative nucleolar protein 5-3 (450 aa).

Positions 252–370 (IAPNLTALVG…LEARLRNLEG (119 aa)) constitute a Nop domain. Residues 375 to 423 (ACEEEEEVNDKDTKKEADDEEEPKTEECSKKRKKEAELETVEDPAKKSK) form a disordered region. The span at 399–423 (TEECSKKRKKEAELETVEDPAKKSK) shows a compositional bias: basic and acidic residues.

Belongs to the NOP5/NOP56 family.

It is found in the nucleus. Its subcellular location is the nucleolus. Functionally, required for 60S ribosomal subunit biogenesis. The chain is Putative nucleolar protein 5-3 (NOP5-3) from Arabidopsis thaliana (Mouse-ear cress).